Reading from the N-terminus, the 74-residue chain is Sec-independent protein translocase protein TatA (74 aa).

The chain crosses the membrane as a helical span at residues 1–21 (MGSMSWIHWVIVLGIVALLFG). A disordered region spans residues 51–74 (EVADNKAKSALPRTEAEAEELRKS). Residues 64-74 (TEAEAEELRKS) are compositionally biased toward basic and acidic residues.

Belongs to the TatA/E family. The Tat system comprises two distinct complexes: a TatABC complex, containing multiple copies of TatA, TatB and TatC subunits, and a separate TatA complex, containing only TatA subunits. Substrates initially bind to the TatABC complex, which probably triggers association of the separate TatA complex to form the active translocon.

The protein resides in the cell inner membrane. Its function is as follows. Part of the twin-arginine translocation (Tat) system that transports large folded proteins containing a characteristic twin-arginine motif in their signal peptide across membranes. TatA could form the protein-conducting channel of the Tat system. This chain is Sec-independent protein translocase protein TatA, found in Caulobacter vibrioides (strain ATCC 19089 / CIP 103742 / CB 15) (Caulobacter crescentus).